The primary structure comprises 288 residues: CBY1-interacting BAR domain-containing protein 2 (288 aa).

Residues 6-217 form a BAR-like region; sequence SRDSQVRVME…ESYDLEKDLE (212 aa). 2 disordered regions span residues 133–157 and 256–288; these read QKSPSDRQTISQAETSVQRASVDAS and TIRSQRKEAVSEDDSAEEDPVEDLRGQAQRLNQ. Residues 138-157 show a composition bias toward polar residues; it reads DRQTISQAETSVQRASVDAS. Acidic residues predominate over residues 266–276; the sequence is SEDDSAEEDPV.

This sequence belongs to the CIBAR family. As to quaternary structure, homodimer (via BAR-like domain). Heterodimer (via BAR-like domain) with FAM92A. Interacts with CBY1.

Its subcellular location is the cytoplasm. The protein localises to the cytoskeleton. It is found in the microtubule organizing center. The protein resides in the centrosome. It localises to the centriole. Its subcellular location is the cilium basal body. May play a role in ciliogenesis. In cooperation with CBY1 may facilitate ciliogenesis likely by the recruitment and fusion of endosomal vesicles at distal appendages during early stages of ciliogenesis. The chain is CBY1-interacting BAR domain-containing protein 2 (CIBAR2) from Bos taurus (Bovine).